The following is a 220-amino-acid chain: Orotidine 5'-phosphate decarboxylase (220 aa).

Residues Asp12, Lys34, 60-69 (DFKVADIPNT), Ser117, 170-180 (PGVGAQGGKAS), Gly193, and Arg194 each bind substrate. Lys62 acts as the Proton donor in catalysis.

It belongs to the OMP decarboxylase family. Type 1 subfamily. Homodimer.

The enzyme catalyses orotidine 5'-phosphate + H(+) = UMP + CO2. Its pathway is pyrimidine metabolism; UMP biosynthesis via de novo pathway; UMP from orotate: step 2/2. Its function is as follows. Catalyzes the decarboxylation of orotidine 5'-monophosphate (OMP) to uridine 5'-monophosphate (UMP). The polypeptide is Orotidine 5'-phosphate decarboxylase (Methanosarcina mazei (strain ATCC BAA-159 / DSM 3647 / Goe1 / Go1 / JCM 11833 / OCM 88) (Methanosarcina frisia)).